We begin with the raw amino-acid sequence, 1867 residues long: Probable serine/threonine-protein kinase roco8 (1867 aa).

The region spanning 16–93 (SSDGLQIKDR…DDYIFYQFDN (78 aa)) is the DEP 1 domain. Disordered stretches follow at residues 96 to 115 (NNNN…TTAT) and 121 to 225 (VSTK…NSFN). Low complexity predominate over residues 121–223 (VSTKIGSIGK…NSNSTYNSNS (103 aa)). Residues 264 to 342 (GDKGLKLQKK…NNNNGGGGVM (79 aa)) form the DEP 2 domain. 8 LRR repeats span residues 491 to 512 (RLDD…IINT), 515 to 536 (FLRI…ESIA), 540 to 561 (NLES…FSRL), 563 to 584 (LLTK…VFQL), 586 to 607 (NLEE…IGSL), 609 to 631 (SLEK…LGLL), 633 to 656 (RLKS…STLP), and 657 to 678 (LLEQ…ITSK). The 249-residue stretch at 693-941 (GTETLSHIKL…NEIIQTLLNQ (249 aa)) folds into the Roc domain. Disordered regions lie at residues 763–813 (QNGI…KKRP) and 942–961 (SNNN…KQSN). The span at 768–793 (TSSSNLNLSTGTLPPPTQLSSSTSEL) shows a compositional bias: low complexity. Residues 974–1111 (PSIYITLETN…ILYTLKNNSN (138 aa)) form the COR domain. The segment at 1163-1207 (SPSLSLSNSSQSVFTNPNNNNNNKSEQQQQQQQQQQQPQPISTSP) is disordered. The Protein kinase domain maps to 1456–1864 (LIYQEEIGVG…TLNEIKDSTI (409 aa)). Residues 1462 to 1470 (IGVGGFSRV) and K1483 each bind ATP. A disordered region spans residues 1509–1546 (SNSSLSISLSSSTSSLSPPIVNNNNNNNNLNNNLNNLN). Catalysis depends on D1721, which acts as the Proton acceptor.

It belongs to the protein kinase superfamily. TKL Ser/Thr protein kinase family. ROCO subfamily.

The enzyme catalyses L-seryl-[protein] + ATP = O-phospho-L-seryl-[protein] + ADP + H(+). It carries out the reaction L-threonyl-[protein] + ATP = O-phospho-L-threonyl-[protein] + ADP + H(+). The protein is Probable serine/threonine-protein kinase roco8 (roco8) of Dictyostelium discoideum (Social amoeba).